The following is a 449-amino-acid chain: Nucleoprotein (449 aa).

A disordered region spans residues 1-55; it reads MSFTPGKQSSSRASSGNRSGNGILKWADQSDQSRNVQTRGRRVQSKQTATSQQPS. Residues 9–22 are compositionally biased toward low complexity; that stretch reads SSSRASSGNRSGNG. Polar residues-rich tracts occupy residues 29–38 and 45–55; these read QSDQSRNVQT and SKQTATSQQPS. The segment at 52-194 is RNA-binding; sequence QQPSGGTVVP…GYYIEGSGRS (143 aa). The CoV N NTD domain maps to 61 to 190; sequence PYYSWFSGIT…VLPQGYYIEG (130 aa). Residues arginine 106, arginine 122, and arginine 164 each coordinate RNA. Disordered stretches follow at residues 158–231, 266–297, and 387–449; these read PADI…VTPD, ILNK…NFGG, and MMNI…TSEI. Serine 167 is modified (phosphoserine; by host). Threonine 174 is subject to Phosphothreonine; by host. A Phosphoserine; by host modification is found at serine 191. 2 stretches are compositionally biased toward polar residues: residues 194–204 and 212–227; these read SAPNSRSTSRA and GSRS…STPG. Positions 259–384 constitute a CoV N CTD domain; it reads AKEVRQKILN…QNLNAYQHQE (126 aa). Over residues 266–276 the composition is skewed to basic residues; that stretch reads ILNKPRQKRSP. The segment at 266-385 is dimerization; the sequence is ILNKPRQKRS…NLNAYQHQED (120 aa). At serine 391 the chain carries Phosphoserine; by host. A compositionally biased stretch (polar residues) spans 400-410; it reads QKNGQVENDNV. Residues 423–440 are compositionally biased toward basic and acidic residues; the sequence is KSRELTAEDISLLKKMDE. Serine 424 is subject to Phosphoserine; by host. Residue threonine 428 is modified to Phosphothreonine; by host.

Belongs to the betacoronavirus nucleocapsid protein family. In terms of assembly, homooligomer. Both monomeric and oligomeric forms interact with RNA. Interacts with protein M. Interacts with NSP3; this interaction serves to tether the genome to the newly translated replicase-transcriptase complex at a very early stage of infection. ADP-ribosylated. The ADP-ribosylation is retained in the virion during infection. In terms of processing, phosphorylated on serine and threonine residues.

It localises to the virion. The protein resides in the host endoplasmic reticulum-Golgi intermediate compartment. The protein localises to the host Golgi apparatus. Its function is as follows. Packages the positive strand viral genome RNA into a helical ribonucleocapsid (RNP) and plays a fundamental role during virion assembly through its interactions with the viral genome and membrane protein M. Plays an important role in enhancing the efficiency of subgenomic viral RNA transcription as well as viral replication. The chain is Nucleoprotein from Sus scrofa (Pig).